We begin with the raw amino-acid sequence, 108 residues long: Large ribosomal subunit protein uL24 (108 aa).

The protein belongs to the universal ribosomal protein uL24 family. Part of the 50S ribosomal subunit.

One of two assembly initiator proteins, it binds directly to the 5'-end of the 23S rRNA, where it nucleates assembly of the 50S subunit. In terms of biological role, one of the proteins that surrounds the polypeptide exit tunnel on the outside of the subunit. This chain is Large ribosomal subunit protein uL24, found in Moorella thermoacetica (strain ATCC 39073 / JCM 9320).